Reading from the N-terminus, the 358-residue chain is Histidinol-phosphate aminotransferase (358 aa).

The residue at position 211 (lysine 211) is an N6-(pyridoxal phosphate)lysine.

This sequence belongs to the class-II pyridoxal-phosphate-dependent aminotransferase family. Histidinol-phosphate aminotransferase subfamily. As to quaternary structure, homodimer. Pyridoxal 5'-phosphate is required as a cofactor.

It carries out the reaction L-histidinol phosphate + 2-oxoglutarate = 3-(imidazol-4-yl)-2-oxopropyl phosphate + L-glutamate. Its pathway is amino-acid biosynthesis; L-histidine biosynthesis; L-histidine from 5-phospho-alpha-D-ribose 1-diphosphate: step 7/9. This chain is Histidinol-phosphate aminotransferase, found in Blochmanniella pennsylvanica (strain BPEN).